The following is a 264-amino-acid chain: S-adenosylmethionine decarboxylase proenzyme (264 aa).

Serine 112 serves as the catalytic Schiff-base intermediate with substrate; via pyruvic acid. Residue serine 112 is modified to Pyruvic acid (Ser); by autocatalysis. Catalysis depends on histidine 117, which acts as the Proton acceptor; for processing activity. The active-site Proton donor; for catalytic activity is the cysteine 140.

It belongs to the prokaryotic AdoMetDC family. Type 2 subfamily. Heterooctamer of four alpha and four beta chains arranged as a tetramer of alpha/beta heterodimers. Requires pyruvate as cofactor. Post-translationally, is synthesized initially as an inactive proenzyme. Formation of the active enzyme involves a self-maturation process in which the active site pyruvoyl group is generated from an internal serine residue via an autocatalytic post-translational modification. Two non-identical subunits are generated from the proenzyme in this reaction, and the pyruvate is formed at the N-terminus of the alpha chain, which is derived from the carboxyl end of the proenzyme. The post-translation cleavage follows an unusual pathway, termed non-hydrolytic serinolysis, in which the side chain hydroxyl group of the serine supplies its oxygen atom to form the C-terminus of the beta chain, while the remainder of the serine residue undergoes an oxidative deamination to produce ammonia and the pyruvoyl group blocking the N-terminus of the alpha chain.

It carries out the reaction S-adenosyl-L-methionine + H(+) = S-adenosyl 3-(methylsulfanyl)propylamine + CO2. Its pathway is amine and polyamine biosynthesis; S-adenosylmethioninamine biosynthesis; S-adenosylmethioninamine from S-adenosyl-L-methionine: step 1/1. In terms of biological role, catalyzes the decarboxylation of S-adenosylmethionine to S-adenosylmethioninamine (dcAdoMet), the propylamine donor required for the synthesis of the polyamines spermine and spermidine from the diamine putrescine. The protein is S-adenosylmethionine decarboxylase proenzyme of Yersinia pseudotuberculosis serotype I (strain IP32953).